Consider the following 179-residue polypeptide: Ubiquitin-conjugating enzyme E2 2 (179 aa).

The interval 1–28 is disordered; it reads MSTPARRRLMRDFKRMQQDPPSGVSASP. Positions 4–150 constitute a UBC core domain; the sequence is PARRRLMRDF…VRETVENSWN (147 aa). Residue Cys-88 is the Glycyl thioester intermediate of the active site. Positions 145–179 are disordered; the sequence is VENSWNDDDDEEEEEEDEDEAEDEDDDDDDNIDED. Residues 149–179 show a composition bias toward acidic residues; it reads WNDDDDEEEEEEDEDEAEDEDDDDDDNIDED. The segment at 151–179 is acidic tail; that stretch reads DDDDEEEEEEDEDEAEDEDDDDDDNIDED.

This sequence belongs to the ubiquitin-conjugating enzyme family.

Its subcellular location is the cytoplasm. The protein resides in the nucleus. The catalysed reaction is S-ubiquitinyl-[E1 ubiquitin-activating enzyme]-L-cysteine + [E2 ubiquitin-conjugating enzyme]-L-cysteine = [E1 ubiquitin-activating enzyme]-L-cysteine + S-ubiquitinyl-[E2 ubiquitin-conjugating enzyme]-L-cysteine.. It participates in protein modification; protein ubiquitination. Its function is as follows. Catalyzes the covalent attachment of ubiquitin to other proteins. Plays a role in transcription regulation by catalyzing the monoubiquitination of histone H2B to form H2BK123ub1. H2BK123ub1 gives a specific tag for epigenetic transcriptional activation and is also a prerequisite for H3K4me and H3K79me formation. Also involved in postreplication repair of UV-damaged DNA, in N-end rule-dependent protein degradation and in sporulation. This is Ubiquitin-conjugating enzyme E2 2 (UBC2) from Candida albicans (strain SC5314 / ATCC MYA-2876) (Yeast).